A 128-amino-acid polypeptide reads, in one-letter code: Small ribosomal subunit protein bS6 (128 aa).

The tract at residues 100-128 is disordered; that stretch reads SPMAKAKEERFTRRDDERREEATEAASEE. Over residues 104–121 the composition is skewed to basic and acidic residues; the sequence is KAKEERFTRRDDERREEA.

The protein belongs to the bacterial ribosomal protein bS6 family.

Its function is as follows. Binds together with bS18 to 16S ribosomal RNA. The sequence is that of Small ribosomal subunit protein bS6 from Aeromonas hydrophila subsp. hydrophila (strain ATCC 7966 / DSM 30187 / BCRC 13018 / CCUG 14551 / JCM 1027 / KCTC 2358 / NCIMB 9240 / NCTC 8049).